A 138-amino-acid chain; its full sequence is Large ribosomal subunit protein uL16 (138 aa).

Belongs to the universal ribosomal protein uL16 family. As to quaternary structure, part of the 50S ribosomal subunit.

Its function is as follows. Binds 23S rRNA and is also seen to make contacts with the A and possibly P site tRNAs. This is Large ribosomal subunit protein uL16 from Gluconobacter oxydans (strain 621H) (Gluconobacter suboxydans).